Here is a 305-residue protein sequence, read N- to C-terminus: Mitochondrial citrate transporter D (305 aa).

Solcar repeat units follow at residues Leu-10 to Phe-101, Gln-111 to Gln-197, and Arg-211 to Phe-298. The next 6 membrane-spanning stretches (helical) occupy residues Phe-16–Val-36, Ser-78–Trp-98, Leu-118–Val-137, Thr-176–Ala-196, Gln-208–Asn-228, and Leu-270–Val-291.

This sequence belongs to the mitochondrial carrier (TC 2.A.29) family.

The protein localises to the mitochondrion inner membrane. It catalyses the reaction citrate(in) + H(+)(in) = citrate(out) + H(+)(out). Functionally, mitochondrial transporter that mediates citrate export from mitochondria to cytoplasm. Both ctpA, ctpB, and ctpD play important roles in citric acid transport across the mitochondrial membrane and function in a redundant manner. In Aspergillus niger (strain ATCC 1015 / CBS 113.46 / FGSC A1144 / LSHB Ac4 / NCTC 3858a / NRRL 328 / USDA 3528.7), this protein is Mitochondrial citrate transporter D.